Consider the following 841-residue polypeptide: Nuclear RNA export factor 2 (841 aa).

The segment at 1-285 (MPNQMRVLDF…NFELVDGKPF (285 aa)) is RNA-binding unit probably involved in Piwi-dependent recruitment and single-stranded RNA-PPNP complex formation. LRR repeat units lie at residues 200 to 221 (RLNG…TLLA), 224 to 245 (DYAL…CRAL), and 249 to 270 (RARE…PANI). The segment at 286 to 553 (NMLHKIFSPL…EYVRAVKEVF (268 aa)) is necessary for silencing function. Residues 325-408 (WHAFMIPDPS…IFRYYLRMNV (84 aa)) form the RRM domain. LRR repeat units follow at residues 475–496 (TCSE…HVLG), 500–521 (CLRA…HSLG), and 524–545 (PLKS…PSEY). The NTF2 domain occupies 585-758 (LVGAFLENYL…LKIANERLHI (174 aa)). The 54-residue stretch at 788 to 841 (DVKDHKLLLFQEVTGLISTWVTSIVEEADWDFERALKLFIQKNADHEIPDLAFA) folds into the TAP-C domain.

Belongs to the NXF family. As to quaternary structure, in the ovaries, part of a complex composed of at least Panx, nxf2, piwi and Nxt1. The complex is knowns as Panx-induced cotranscriptional silencing (PICTS) complex, Panx-nxf2-dependent TAP/p15 silencing (Pandas complex), SFiNX (silencing factor interacting nuclear export variant) or piwi-Panx-nxf2-p15 (PPNP) complex. Interacts (via TAP-C domain) with Panx (via NIR region); the interaction is direct. Interacts (via NTF2 domain) with Nxt1; the interaction is direct and prevents Nxt1 binding to nucleoporins. Interacts with sbr/Nxf1. In terms of tissue distribution, expressed in female gonads (at protein level). Expressed ubiquitously.

The protein resides in the cytoplasm. It is found in the nucleus. It localises to the nucleoplasm. May be involved in the export of mRNA from the nucleus to the cytoplasm. In the ovaries, forms a complex with nxf2, piwi and Nxt1 which acts as effectors of cotranscriptional transposon silencing. On recruitment to a target transcript, interacts with single stranded RNA, thereby anchoring the complex via the nascent target transcript to chromatin and allowing Panx to recruit silencing effectors to establishing repressive heterochromatin at transposon loci. Does not affect piRNA biogenesis. The interaction with Panx stabilizes the nuclear protein complex. Does not bind nucleoporins, but regulates sbr/Nxf1 binding to nucleoporins and, indirectly, transposon exports. This chain is Nuclear RNA export factor 2 (nxf2), found in Drosophila melanogaster (Fruit fly).